The chain runs to 934 residues: Translation initiation factor IF-2 (934 aa).

Positions 54 to 323 (AQESKPTTPP…KRQKRNEYEA (270 aa)) are disordered. Composition is skewed to low complexity over residues 80–154 (PKPG…AGKP), 185–197 (RGGATPGDMPRPG), 206–231 (GQAPRPGARPAQGQGRGQGTAKPGAA), and 238–250 (RPSPAMMPATPSP). Residues 260–303 (GFGGGRGRGGRPGGPGGPGGPGGPGPRGGRGGRRGGTAGAFGRP) are compositionally biased toward gly residues. Residues 308–317 (RRGRKSKRQK) show a composition bias toward basic residues. Positions 430–602 (QRPPVVTVMG…VLLTADASLD (173 aa)) constitute a tr-type G domain. The segment at 439–446 (GHVDHGKT) is G1. 439-446 (GHVDHGKT) contacts GTP. The tract at residues 464–468 (GITQH) is G2. Residues 489–492 (DTPG) are G3. Residues 489 to 493 (DTPGH) and 543 to 546 (NKID) contribute to the GTP site. A G4 region spans residues 543 to 546 (NKID). The interval 579 to 581 (SAK) is G5.

The protein belongs to the TRAFAC class translation factor GTPase superfamily. Classic translation factor GTPase family. IF-2 subfamily.

Its subcellular location is the cytoplasm. One of the essential components for the initiation of protein synthesis. Protects formylmethionyl-tRNA from spontaneous hydrolysis and promotes its binding to the 30S ribosomal subunits. Also involved in the hydrolysis of GTP during the formation of the 70S ribosomal complex. The polypeptide is Translation initiation factor IF-2 (Corynebacterium urealyticum (strain ATCC 43042 / DSM 7109)).